A 71-amino-acid chain; its full sequence is MAEDVRAEIVASVLEVVVHEGDQIGEGDTLVLLESMKMEIPVLAEVAGTVTKVNVAEGDVIQAGHLIAVID.

The 70-residue stretch at 2 to 71 (AEDVRAEIVA…QAGHLIAVID (70 aa)) folds into the Biotinyl-binding domain. N6-biotinyllysine is present on K37.

This Mycolicibacterium smegmatis (strain ATCC 700084 / mc(2)155) (Mycobacterium smegmatis) protein is Biotinylated protein TB7.3 homolog.